Here is a 193-residue protein sequence, read N- to C-terminus: 7-methyl-GTP pyrophosphatase (193 aa).

Aspartate 70 serves as the catalytic Proton acceptor.

The protein belongs to the Maf family. YceF subfamily. A divalent metal cation serves as cofactor.

It localises to the cytoplasm. It carries out the reaction N(7)-methyl-GTP + H2O = N(7)-methyl-GMP + diphosphate + H(+). In terms of biological role, nucleoside triphosphate pyrophosphatase that hydrolyzes 7-methyl-GTP (m(7)GTP). May have a dual role in cell division arrest and in preventing the incorporation of modified nucleotides into cellular nucleic acids. This is 7-methyl-GTP pyrophosphatase from Vibrio cholerae serotype O1 (strain ATCC 39315 / El Tor Inaba N16961).